We begin with the raw amino-acid sequence, 1052 residues long: Eukaryotic translation initiation factor 3 subunit A (1052 aa).

A coiled-coil region spans residues 92–121 (LKKFIELAEKKVTEAQAKADEIQSSLESAA). Residues 339–523 (MTKAASFVLL…GVLTFDTDVF (185 aa)) enclose the PCI domain. Residues 580–906 (EARLQAKRAA…AEARRAARRT (327 aa)) adopt a coiled-coil conformation. Composition is skewed to basic and acidic residues over residues 617-632 (AATD…EETR) and 794-901 (KEVS…EARR). Disordered regions lie at residues 617-646 (AATD…AEKQ) and 794-1052 (KEVS…QGGQ). 2 stretches are compositionally biased toward low complexity: residues 905-927 (RTGG…TAPR) and 948-964 (KEAA…AAPE). Residues 1013–1028 (GSSQPPSRTQTPGSSS) are compositionally biased toward polar residues.

Belongs to the eIF-3 subunit A family. As to quaternary structure, component of the eukaryotic translation initiation factor 3 (eIF-3) complex.

It is found in the cytoplasm. Functionally, RNA-binding component of the eukaryotic translation initiation factor 3 (eIF-3) complex, which is involved in protein synthesis of a specialized repertoire of mRNAs and, together with other initiation factors, stimulates binding of mRNA and methionyl-tRNAi to the 40S ribosome. The eIF-3 complex specifically targets and initiates translation of a subset of mRNAs involved in cell proliferation. In Aspergillus niger (strain ATCC MYA-4892 / CBS 513.88 / FGSC A1513), this protein is Eukaryotic translation initiation factor 3 subunit A (tif32).